Here is a 171-residue protein sequence, read N- to C-terminus: Lipoprotein signal peptidase (171 aa).

A run of 3 helical transmembrane segments spans residues 12–32, 67–87, and 93–113; these read WYWV…WVLA, WQRW…TVWL, and SLLK…GNLV. Active-site residues include Asp-123 and Asp-141. A helical membrane pass occupies residues 137-157; sequence FNIADSAICIGAVLIIWDAFL.

It belongs to the peptidase A8 family.

It is found in the cell inner membrane. It catalyses the reaction Release of signal peptides from bacterial membrane prolipoproteins. Hydrolyzes -Xaa-Yaa-Zaa-|-(S,diacylglyceryl)Cys-, in which Xaa is hydrophobic (preferably Leu), and Yaa (Ala or Ser) and Zaa (Gly or Ala) have small, neutral side chains.. It participates in protein modification; lipoprotein biosynthesis (signal peptide cleavage). Functionally, this protein specifically catalyzes the removal of signal peptides from prolipoproteins. In Shewanella baltica (strain OS195), this protein is Lipoprotein signal peptidase.